The sequence spans 146 residues: Linear conopeptide (146 aa).

A signal peptide spans 1-19; that stretch reads MLRLIIAAAVLVSACLAYP. Positions 20 to 34 are excised as a propeptide; that stretch reads QRREGAPADAANLQS. At M40 the chain carries Methionine sulfoxide; partial; in Cn2. 2 consecutive propeptides follow at residues 58–80 and 104–146; these read FLPFNPNLQMGYKRDFDENLEKR and FLHN…DKEQ. The segment at 107–146 is disordered; it reads NEKGDKHPFANVDSADTDLGQFEPSAENKNGEFRFFDKEQ. Residues 135-146 show a composition bias toward basic and acidic residues; it reads KNGEFRFFDKEQ.

In terms of tissue distribution, expressed by the venom duct.

It localises to the secreted. The protein is Linear conopeptide of Conus consors (Singed cone).